The following is a 186-amino-acid chain: Ribosome-recycling factor (186 aa).

The protein belongs to the RRF family.

Its subcellular location is the cytoplasm. Its function is as follows. Responsible for the release of ribosomes from messenger RNA at the termination of protein biosynthesis. May increase the efficiency of translation by recycling ribosomes from one round of translation to another. This is Ribosome-recycling factor from Paraburkholderia xenovorans (strain LB400).